A 196-amino-acid chain; its full sequence is SAGA-associated factor 11 homolog (196 aa).

The segment at 1–22 is disordered; it reads MSAANMPTTTGAQGSGNQVPTT. Residues 106–127 form an SGF11-type zinc finger; the sequence is CTCPNCDRLVAAARFAPHLEKC. A disordered region spans residues 141–196; sequence RLATKEGATSAHLHSSGNTGGTDDEDDVDWSSDKRRKKSNQNSRNNGSKKNNGKTF. S172 carries the phosphoserine modification. Over residues 180 to 196 the composition is skewed to low complexity; it reads NQNSRNNGSKKNNGKTF.

Belongs to the SGF11 family. In terms of assembly, component of some SAGA transcription coactivator-HAT complexes, at least composed of Ada2b, not/nonstop, Pcaf/Gcn5, Sgf11 and Spt3. Within the SAGA complex, Sgf11, e(y)2, and not/nonstop form an additional subcomplex of SAGA called the DUB module (deubiquitination module). Interacts directly with not/nonstop. Interacts with the AMEX complex component xmas-2. Interacts with Cbp80; important for promoter recruitment of Sgf11 that is not associated with the DUB module.

The protein resides in the nucleus. The protein localises to the nucleoplasm. It localises to the cytoplasm. Its function is as follows. Component of the transcription regulatory histone acetylation (HAT) complex SAGA, a multiprotein complex that activates transcription by remodeling chromatin and mediating histone acetylation and deubiquitination. Within the SAGA complex, participates in a subcomplex that specifically deubiquitinates histone H2B. The SAGA complex is recruited to specific gene promoters by activators, where it is required for transcription. Required for nuclear receptor-mediated transactivation. Binds independently on SAGA to promoters in an RNA-dependent manner. Binds to mRNA and is essential for total mRNA export from the nucleus. Required to counteract heterochromatin silencing. Controls the development of neuronal connectivity in visual system by being required for accurate axon targeting in the optic lobe. Required for expression of ecdysone-induced genes such as br/broad. This chain is SAGA-associated factor 11 homolog, found in Drosophila simulans (Fruit fly).